Reading from the N-terminus, the 243-residue chain is Ubiquinone biosynthesis O-methyltransferase (243 aa).

S-adenosyl-L-methionine contacts are provided by arginine 45, glycine 65, aspartate 86, and leucine 130.

This sequence belongs to the methyltransferase superfamily. UbiG/COQ3 family.

It catalyses the reaction a 3-demethylubiquinol + S-adenosyl-L-methionine = a ubiquinol + S-adenosyl-L-homocysteine + H(+). The catalysed reaction is a 3-(all-trans-polyprenyl)benzene-1,2-diol + S-adenosyl-L-methionine = a 2-methoxy-6-(all-trans-polyprenyl)phenol + S-adenosyl-L-homocysteine + H(+). Its pathway is cofactor biosynthesis; ubiquinone biosynthesis. Its function is as follows. O-methyltransferase that catalyzes the 2 O-methylation steps in the ubiquinone biosynthetic pathway. This chain is Ubiquinone biosynthesis O-methyltransferase, found in Idiomarina loihiensis (strain ATCC BAA-735 / DSM 15497 / L2-TR).